The chain runs to 253 residues: NAC transcription factor 32 (253 aa).

Residues 10-160 form the NAC domain; the sequence is FPPGFRFHPT…DWVLCRIYNK (151 aa). A DNA-binding region spans residues 106 to 166; it reads VGIKKALVFY…IYNKKGVIEK (61 aa).

In terms of tissue distribution, expressed in germinating seeds, roots, leaf veins, open flowers and silique stalks.

The protein resides in the nucleus. In terms of biological role, transcriptional activator that positively regulates age-dependent senescence, dark-induced leaf senescence and stress-induced senescence. Regulates leaf senescence through the modulation of the expression of senescence-associated genes SGR1/NYE1, SAG113 and SAUR36/SAG201, which are involved in chlorophyll degradation, and abscisic acid (ABA) and auxin promotion of senescence, respectively. Promotes reactive oxygen species (ROS) production during age-dependent and stress-induced senescence. Positively regulates auxin-mediated responses in roots. Stress-responsive NAC transcription factor involved in ABA-inducible leaf senescence signaling. Required for normal seed development and morphology. The sequence is that of NAC transcription factor 32 from Arabidopsis thaliana (Mouse-ear cress).